We begin with the raw amino-acid sequence, 405 residues long: Serine/threonine transporter SstT (405 aa).

9 helical membrane passes run 13–33 (GNLV…ATFS), 43–63 (IGNL…FILV), 81–101 (IVVL…ILSF), 140–160 (ALMN…GLAL), 191–211 (FGIF…ALAG), 215–235 (LLAV…PMIV), 297–317 (MAGA…TMGI), 338–358 (ASGV…LFGI), and 362–382 (IAMQ…SAET).

Belongs to the dicarboxylate/amino acid:cation symporter (DAACS) (TC 2.A.23) family.

It localises to the cell inner membrane. The enzyme catalyses L-serine(in) + Na(+)(in) = L-serine(out) + Na(+)(out). It carries out the reaction L-threonine(in) + Na(+)(in) = L-threonine(out) + Na(+)(out). Its function is as follows. Involved in the import of serine and threonine into the cell, with the concomitant import of sodium (symport system). This Vibrio cholerae serotype O1 (strain ATCC 39315 / El Tor Inaba N16961) protein is Serine/threonine transporter SstT.